The following is a 314-amino-acid chain: Putative thiamine biosynthesis protein HI_0357 (314 aa).

The protein belongs to the NMT1/THI5 family.

In terms of biological role, probably involved in thiamine biosynthesis. The sequence is that of Putative thiamine biosynthesis protein HI_0357 from Haemophilus influenzae (strain ATCC 51907 / DSM 11121 / KW20 / Rd).